The chain runs to 249 residues: Probable septum site-determining protein MinC (249 aa).

A disordered region spans residues 115 to 141 (KPAQEAPAQAEPEAAAAPEPANEPAPA). The segment covering 118–141 (QEAPAQAEPEAAAAPEPANEPAPA) has biased composition (low complexity).

This sequence belongs to the MinC family. In terms of assembly, interacts with MinD and FtsZ.

Functionally, cell division inhibitor that blocks the formation of polar Z ring septums. Rapidly oscillates between the poles of the cell to destabilize FtsZ filaments that have formed before they mature into polar Z rings. Prevents FtsZ polymerization. This Marinobacter nauticus (strain ATCC 700491 / DSM 11845 / VT8) (Marinobacter aquaeolei) protein is Probable septum site-determining protein MinC.